A 183-amino-acid polypeptide reads, in one-letter code: Oligoribonuclease (183 aa).

The region spanning 8 to 171 (LIWLDMEMTG…ADIRESIAEL (164 aa)) is the Exonuclease domain. Residue Tyr129 is part of the active site.

It belongs to the oligoribonuclease family.

It localises to the cytoplasm. Its function is as follows. 3'-to-5' exoribonuclease specific for small oligoribonucleotides. The sequence is that of Oligoribonuclease from Aromatoleum aromaticum (strain DSM 19018 / LMG 30748 / EbN1) (Azoarcus sp. (strain EbN1)).